We begin with the raw amino-acid sequence, 469 residues long: MLQIYNTLSRQKETFTPINAGKVGLYVCGCTVYDLCHIGHGRTYISFDNIARYLRFSGYDVNYVRNITDVEDKIINRANENNETTEALTERTIAAMHQDFDSLNMARPDLEPRVTTHMNEIIAMIETLVTKEHAYVAGANAASTGQGDVLFDVSSYNDYGKLSGQNLEQLQSGSRVEVDQNKNNPLDFVLWKSAKPGEPSWSSPWGEGRPGWHIECSAMNAKELGHHFDIHGGGSDLTFPHHENEIAQSCCALNTPYVNYWMHTGMVQVDQEKMSKSLGNFFTIRDVLAQYDAETVRFFLTTGHYRSQLNYSTDNLTQARASVERIYTSLRDVNIESDYVINKDSSFVKQFCQAMDDDFNTPQALAVLFEISKELNVAKAAANNALAIDLASTLVALGEIVGLLQLDPAAFLQGDNDNDEVAIIEALIVQRNQARIDKDWAMADDARDKLNAMNIVLEDSAGKTTWRKA.

Cysteine 28 is a binding site for Zn(2+). Residues 30 to 40 carry the 'HIGH' region motif; the sequence is CTVYDLCHIGH. Cysteine 216, histidine 241, and glutamate 245 together coordinate Zn(2+). The 'KMSKS' region motif lies at 273 to 277; the sequence is KMSKS. Residue lysine 276 participates in ATP binding.

The protein belongs to the class-I aminoacyl-tRNA synthetase family. Monomer. Zn(2+) is required as a cofactor.

The protein localises to the cytoplasm. The catalysed reaction is tRNA(Cys) + L-cysteine + ATP = L-cysteinyl-tRNA(Cys) + AMP + diphosphate. The polypeptide is Cysteine--tRNA ligase (Colwellia psychrerythraea (strain 34H / ATCC BAA-681) (Vibrio psychroerythus)).